The chain runs to 191 residues: UPF0149 protein VV1_1551 (191 aa).

Belongs to the UPF0149 family.

In Vibrio vulnificus (strain CMCP6), this protein is UPF0149 protein VV1_1551.